The sequence spans 253 residues: Indole-3-glycerol phosphate synthase (253 aa).

It belongs to the TrpC family.

It catalyses the reaction 1-(2-carboxyphenylamino)-1-deoxy-D-ribulose 5-phosphate + H(+) = (1S,2R)-1-C-(indol-3-yl)glycerol 3-phosphate + CO2 + H2O. It functions in the pathway amino-acid biosynthesis; L-tryptophan biosynthesis; L-tryptophan from chorismate: step 4/5. The protein is Indole-3-glycerol phosphate synthase of Exiguobacterium sp. (strain ATCC BAA-1283 / AT1b).